Reading from the N-terminus, the 207-residue chain is uncharacterized protein (207 aa).

A helical membrane pass occupies residues 177–197 (LILAIGFIIGILLPTFFILLG).

It localises to the membrane. This is an uncharacterized protein from Haemophilus influenzae (strain ATCC 51907 / DSM 11121 / KW20 / Rd).